Here is a 296-residue protein sequence, read N- to C-terminus: Phosphoribosylaminoimidazole-succinocarboxamide synthase (296 aa).

This sequence belongs to the SAICAR synthetase family.

The enzyme catalyses 5-amino-1-(5-phospho-D-ribosyl)imidazole-4-carboxylate + L-aspartate + ATP = (2S)-2-[5-amino-1-(5-phospho-beta-D-ribosyl)imidazole-4-carboxamido]succinate + ADP + phosphate + 2 H(+). It functions in the pathway purine metabolism; IMP biosynthesis via de novo pathway; 5-amino-1-(5-phospho-D-ribosyl)imidazole-4-carboxamide from 5-amino-1-(5-phospho-D-ribosyl)imidazole-4-carboxylate: step 1/2. The polypeptide is Phosphoribosylaminoimidazole-succinocarboxamide synthase (Desulfotalea psychrophila (strain LSv54 / DSM 12343)).